The primary structure comprises 338 residues: Malate dehydrogenase, mitochondrial (338 aa).

The transit peptide at 1-24 directs the protein to the mitochondrion; that stretch reads MLSALARPVGAALRRSFSTSAQNN. NAD(+)-binding positions include 31 to 37 and aspartate 57; that span reads GASGGIG. Serine 33 carries O-linked (GlcNAc) serine glycosylation. N6-acetyllysine; alternate is present on residues lysine 78 and lysine 91. Residues lysine 78 and lysine 91 each carry the N6-succinyllysine; alternate modification. Residues arginine 104 and arginine 110 each contribute to the substrate site. NAD(+) is bound by residues asparagine 117 and 140-142; that span reads ISN. Asparagine 142 contacts substrate. Lysine 165 carries the N6-acetyllysine modification. Residue arginine 176 coordinates substrate. At lysine 185 the chain carries N6-acetyllysine; alternate. An N6-succinyllysine; alternate modification is found at lysine 185. Histidine 200 serves as the catalytic Proton acceptor. Lysine 203 carries the N6-succinyllysine modification. 2 positions are modified to N6-acetyllysine; alternate: lysine 215 and lysine 239. Lysine 215 and lysine 239 each carry N6-succinyllysine; alternate. Lysine 239 bears the N6-malonyllysine; alternate mark. A Phosphoserine modification is found at serine 246. Methionine 251 lines the NAD(+) pocket. N6-succinyllysine is present on lysine 269. N6-acetyllysine; alternate is present on residues lysine 296, lysine 301, lysine 307, lysine 314, and lysine 324. Residues lysine 296, lysine 301, lysine 307, lysine 314, and lysine 324 each carry the N6-succinyllysine; alternate modification. Lysine 307 carries the N6-malonyllysine; alternate modification. A Phosphoserine modification is found at serine 326. N6-acetyllysine; alternate occurs at positions 328, 329, and 335. The residue at position 328 (lysine 328) is an N6-succinyllysine; alternate. N6-malonyllysine; alternate is present on lysine 329. Lysine 335 carries the post-translational modification N6-succinyllysine; alternate.

The protein belongs to the LDH/MDH superfamily. MDH type 1 family. Homodimer. Acetylation is enhanced after treatment either with trichostin A (TCA) or with nicotinamide (NAM) with the appearance of tri- and tetraacetylations. Glucose also increases acetylation. As to expression, expressed in flagella of epididymal sperm.

Its subcellular location is the mitochondrion matrix. The catalysed reaction is (S)-malate + NAD(+) = oxaloacetate + NADH + H(+). Its activity is regulated as follows. Enzyme activity is enhanced by acetylation. The chain is Malate dehydrogenase, mitochondrial (Mdh2) from Rattus norvegicus (Rat).